The sequence spans 279 residues: Plasmodesmata-located protein 8 (279 aa).

The first 20 residues, 1 to 20 (MRRLFLFSLLFLFFYSSSSS), serve as a signal peptide directing secretion. At 21 to 253 (RSSSESHIFI…PTNGDHVGKS (233 aa)) the chain is on the extracellular side. Gnk2-homologous domains lie at 27–135 (HIFI…TNDF) and 137–237 (GKPD…GSGY). Disulfide bonds link Cys34-Cys113, Cys89-Cys98, Cys101-Cys126, Cys148-Cys215, Cys191-Cys200, and Cys203-Cys228. Residues 254 to 274 (IAIIVGVIAGFAILVVLLSLC) traverse the membrane as a helical segment. The necessary and sufficient for plasmodesmal targeting stretch occupies residues 254 to 274 (IAIIVGVIAGFAILVVLLSLC). At 275–279 (RNSMH) the chain is on the cytoplasmic side.

The protein belongs to the cysteine-rich repeat secretory protein family. Plasmodesmata-located proteins (PDLD) subfamily. As to quaternary structure, interacts with ACBP6; interaction occurs at the plasma membrane. (Microbial infection) Interacts with Grapevine fanleaf virus (GFLV) 2B-MP. As to expression, highly expressed in pollen, lateral root and elongation zone. Higher expression in the reproductive tissues (flowers and buds) than in vegetative organs (leaves and stems). High expression in shoot and root phloem companion cells (at protein level).

It localises to the cell membrane. It is found in the cell junction. The protein resides in the plasmodesma. Its function is as follows. Modulates cell-to-cell trafficking. The protein is Plasmodesmata-located protein 8 of Arabidopsis thaliana (Mouse-ear cress).